The chain runs to 119 residues: Large ribosomal subunit protein bL20 (119 aa).

Belongs to the bacterial ribosomal protein bL20 family.

Binds directly to 23S ribosomal RNA and is necessary for the in vitro assembly process of the 50S ribosomal subunit. It is not involved in the protein synthesizing functions of that subunit. This chain is Large ribosomal subunit protein bL20, found in Nitrosospira multiformis (strain ATCC 25196 / NCIMB 11849 / C 71).